Reading from the N-terminus, the 1066-residue chain is DNA primase (1066 aa).

A disordered region spans residues 694 to 727; that stretch reads DGPSAGGDDGDGDWFPDAGGPGDEEWEEDTDPMD. Positions 715-725 are enriched in acidic residues; sequence GDEEWEEDTDP. The segment at 995–1035 adopts a CHC2-type zinc-finger fold; the sequence is CLRFKHGRASRATARTFLALSVGTNNRLCASLCQQCFATKC.

The protein belongs to the herpesviridae DNA primase family. As to quaternary structure, associates with the helicase and the primase-associated factor to form the helicase-primase factor.

It is found in the host nucleus. Functionally, essential component of the helicase/primase complex. Unwinds the DNA at the replication forks and generates single-stranded DNA for both leading and lagging strand synthesis. The primase initiates primer synthesis and thereby produces large amount of short RNA primers on the lagging strand that the polymerase elongates using dNTPs. The protein is DNA primase of Human herpesvirus 2 (strain HG52) (HHV-2).